The primary structure comprises 313 residues: Aspartate carbamoyltransferase catalytic subunit (313 aa).

Arg53 and Thr54 together coordinate carbamoyl phosphate. Lys82 lines the L-aspartate pocket. Residues Arg103, His131, and Gln134 each contribute to the carbamoyl phosphate site. The L-aspartate site is built by Arg163 and Arg224. Residues Leu263 and Pro264 each contribute to the carbamoyl phosphate site.

This sequence belongs to the aspartate/ornithine carbamoyltransferase superfamily. ATCase family. In terms of assembly, heterooligomer of catalytic and regulatory chains.

The catalysed reaction is carbamoyl phosphate + L-aspartate = N-carbamoyl-L-aspartate + phosphate + H(+). Its pathway is pyrimidine metabolism; UMP biosynthesis via de novo pathway; (S)-dihydroorotate from bicarbonate: step 2/3. Catalyzes the condensation of carbamoyl phosphate and aspartate to form carbamoyl aspartate and inorganic phosphate, the committed step in the de novo pyrimidine nucleotide biosynthesis pathway. This is Aspartate carbamoyltransferase catalytic subunit from Halorubrum lacusprofundi (strain ATCC 49239 / DSM 5036 / JCM 8891 / ACAM 34).